The primary structure comprises 908 residues: Zinc finger CCCH domain-containing protein 41 (908 aa).

Polar residues predominate over residues 1–13; sequence MELSVSSPKQSVL. A disordered region spans residues 1–124; the sequence is MELSVSSPKQ…GRGNYGSWAQ (124 aa). Acidic residues predominate over residues 20–34; that stretch reads SDPEEEHEISEEEDD. Composition is skewed to polar residues over residues 48-59 and 90-105; these read SQSLEQDSSDQA and GQRVQFDNQRMRSNPM. Residues 200 to 228 form a C3H1-type zinc finger; the sequence is GIPRQRCRDFEERGFCLRGDMCPMEHGMN. The interval 333-375 is disordered; it reads NVAPLDDSNQDAAENGCGIRDSRSTSQSVWGRMKGSNSQANSK. Residues 356 to 373 show a composition bias toward polar residues; the sequence is STSQSVWGRMKGSNSQAN. The region spanning 438-510 is the RRM domain; that stretch reads RTLFVNYVPH…RFIKLWWANR (73 aa). 3 disordered regions span residues 558 to 590, 629 to 695, and 807 to 908; these read PTFQTGGAPSSSEQPKPVVVTTSGPKVTPLQQK, VVKR…KQRP, and RESN…QIHQ. The span at 559–588 shows a compositional bias: polar residues; sequence TFQTGGAPSSSEQPKPVVVTTSGPKVTPLQ. The stretch at 587–630 forms a coiled coil; it reads LQQKKADTLERLKETLRKKQEMLEQKRNEYRKKLATLEKQGTVV. The segment covering 630–647 has biased composition (basic and acidic residues); that stretch reads VKREEADEPDAKRVKLDT. Phosphoserine is present on Ser657. Over residues 677–688 the composition is skewed to polar residues; sequence AKLSTETPSPDS. Residues 807–828 show a composition bias toward low complexity; it reads RESNNNNNNSNSLSVSRDNLSS. A compositionally biased stretch (polar residues) spans 846–863; the sequence is KTSSTEEPENTNVSGDND. Over residues 865–886 the composition is skewed to basic and acidic residues; that stretch reads TLDKQETKESDNDNNKSNHESI. Positions 898-908 are enriched in acidic residues; the sequence is TDEEQSEQIHQ.

This is Zinc finger CCCH domain-containing protein 41 from Arabidopsis thaliana (Mouse-ear cress).